A 743-amino-acid polypeptide reads, in one-letter code: Ribosome biogenesis protein BOP1 homolog (743 aa).

WD repeat units lie at residues 365–404, 575–615, 617–655, 659–701, and 712–743; these read GHTA…LMKR, KFSE…RRFK, SGGV…KPYK, SHKG…DYNK, and KHQR…AWTE.

It belongs to the WD repeat BOP1/ERB1 family.

It localises to the nucleus. It is found in the nucleolus. The protein localises to the nucleoplasm. Required for maturation of ribosomal RNAs and formation of the large ribosomal subunit. The polypeptide is Ribosome biogenesis protein BOP1 homolog (Leishmania braziliensis).